Consider the following 78-residue polypeptide: Large ribosomal subunit protein eL20 (78 aa).

Belongs to the eukaryotic ribosomal protein eL20 family. As to quaternary structure, part of the 50S ribosomal subunit. Binds 23S rRNA.

This Pyrobaculum aerophilum (strain ATCC 51768 / DSM 7523 / JCM 9630 / CIP 104966 / NBRC 100827 / IM2) protein is Large ribosomal subunit protein eL20.